The primary structure comprises 526 residues: Glucose-6-phosphate isomerase (526 aa).

Residue glutamate 320 is the Proton donor of the active site. Residues histidine 349 and lysine 453 contribute to the active site.

This sequence belongs to the GPI family.

It localises to the cytoplasm. It carries out the reaction alpha-D-glucose 6-phosphate = beta-D-fructose 6-phosphate. It functions in the pathway carbohydrate biosynthesis; gluconeogenesis. It participates in carbohydrate degradation; glycolysis; D-glyceraldehyde 3-phosphate and glycerone phosphate from D-glucose: step 2/4. In terms of biological role, catalyzes the reversible isomerization of glucose-6-phosphate to fructose-6-phosphate. The polypeptide is Glucose-6-phosphate isomerase (Rippkaea orientalis (strain PCC 8801 / RF-1) (Cyanothece sp. (strain PCC 8801))).